The chain runs to 235 residues: Urease accessory protein UreF (235 aa).

This sequence belongs to the UreF family. In terms of assembly, ureD, UreF and UreG form a complex that acts as a GTP-hydrolysis-dependent molecular chaperone, activating the urease apoprotein by helping to assemble the nickel containing metallocenter of UreC. The UreE protein probably delivers the nickel.

The protein resides in the cytoplasm. Functionally, required for maturation of urease via the functional incorporation of the urease nickel metallocenter. The sequence is that of Urease accessory protein UreF from Haemophilus influenzae (strain 86-028NP).